The primary structure comprises 108 residues: uncharacterized protein (108 aa).

The disordered stretch occupies residues Met1 to Leu108. A compositionally biased stretch (basic residues) spans Lys26 to Leu56. Residues Gly58 to Pro70 show a composition bias toward polar residues. Over residues Lys73–Lys92 the composition is skewed to basic residues. Positions Met93–Leu108 are enriched in basic and acidic residues.

This is an uncharacterized protein from Homo sapiens (Human).